The primary structure comprises 1209 residues: DNA-directed RNA polymerase subunit beta'' (1209 aa).

4 residues coordinate Zn(2+): C233, C308, C315, and C318.

The protein belongs to the RNA polymerase beta' chain family. RpoC2 subfamily. In plastids the minimal PEP RNA polymerase catalytic core is composed of four subunits: alpha, beta, beta', and beta''. When a (nuclear-encoded) sigma factor is associated with the core the holoenzyme is formed, which can initiate transcription. It depends on Zn(2+) as a cofactor.

Its subcellular location is the plastid. The protein resides in the chloroplast. The catalysed reaction is RNA(n) + a ribonucleoside 5'-triphosphate = RNA(n+1) + diphosphate. Its function is as follows. DNA-dependent RNA polymerase catalyzes the transcription of DNA into RNA using the four ribonucleoside triphosphates as substrates. This is DNA-directed RNA polymerase subunit beta'' from Pinus koraiensis (Korean pine).